Consider the following 76-residue polypeptide: Conotoxin VnMEKL-0111 (76 aa).

The N-terminal stretch at Met1–Ala18 is a signal peptide. Residues Leu19–Arg45 constitute a propeptide that is removed on maturation. Intrachain disulfides connect Cys49–Cys65, Cys56–Cys70, and Cys64–Cys74.

This sequence belongs to the conotoxin O2 superfamily. As to expression, expressed by the venom duct.

Its subcellular location is the secreted. The protein is Conotoxin VnMEKL-0111 of Conus ventricosus (Mediterranean cone).